The primary structure comprises 382 residues: Glutaminyl-peptide cyclotransferase-like protein (382 aa).

The helical transmembrane segment at 35 to 55 threads the bilayer; it reads LLPLLLALAVGSAFYTIWSGW. An intrachain disulfide couples Cys-167 to Cys-191. Position 186 (Asp-186) interacts with Zn(2+). The Proton acceptor role is filled by Glu-225. Residue Glu-226 participates in Zn(2+) binding. The active-site Proton acceptor is Asp-269. His-351 lines the Zn(2+) pocket.

This sequence belongs to the glutaminyl-peptide cyclotransferase family.

It is found in the golgi apparatus membrane. The enzyme catalyses N-terminal L-glutaminyl-[peptide] = N-terminal 5-oxo-L-prolyl-[peptide] + NH4(+). Responsible for the biosynthesis of pyroglutamyl peptides. This chain is Glutaminyl-peptide cyclotransferase-like protein (QPCTL), found in Homo sapiens (Human).